Reading from the N-terminus, the 163-residue chain is Phosphopantetheine adenylyltransferase (163 aa).

S9 serves as a coordination point for substrate. Residues 9–10 (SF) and H17 contribute to the ATP site. Substrate is bound by residues K41, V78, and R92. ATP-binding positions include 93-95 (GLR), E103, and 128-134 (SRPITAT).

This sequence belongs to the bacterial CoaD family. Homohexamer. Requires Mg(2+) as cofactor.

It is found in the cytoplasm. It carries out the reaction (R)-4'-phosphopantetheine + ATP + H(+) = 3'-dephospho-CoA + diphosphate. It functions in the pathway cofactor biosynthesis; coenzyme A biosynthesis; CoA from (R)-pantothenate: step 4/5. In terms of biological role, reversibly transfers an adenylyl group from ATP to 4'-phosphopantetheine, yielding dephospho-CoA (dPCoA) and pyrophosphate. This Rhizobium meliloti (strain 1021) (Ensifer meliloti) protein is Phosphopantetheine adenylyltransferase.